Reading from the N-terminus, the 495-residue chain is Cobyric acid synthase (495 aa).

A GATase cobBQ-type domain is found at 262–445 (CLEIAVIRLP…LHGLFDNHRW (184 aa)). Cysteine 340 serves as the catalytic Nucleophile. Histidine 437 is an active-site residue.

The protein belongs to the CobB/CobQ family. CobQ subfamily.

It participates in cofactor biosynthesis; adenosylcobalamin biosynthesis. Catalyzes amidations at positions B, D, E, and G on adenosylcobyrinic A,C-diamide. NH(2) groups are provided by glutamine, and one molecule of ATP is hydrogenolyzed for each amidation. This chain is Cobyric acid synthase, found in Synechococcus sp. (strain JA-3-3Ab) (Cyanobacteria bacterium Yellowstone A-Prime).